Here is a 201-residue protein sequence, read N- to C-terminus: 3-isopropylmalate dehydratase small subunit (201 aa).

Belongs to the LeuD family. LeuD type 1 subfamily. In terms of assembly, heterodimer of LeuC and LeuD.

The enzyme catalyses (2R,3S)-3-isopropylmalate = (2S)-2-isopropylmalate. The protein operates within amino-acid biosynthesis; L-leucine biosynthesis; L-leucine from 3-methyl-2-oxobutanoate: step 2/4. Catalyzes the isomerization between 2-isopropylmalate and 3-isopropylmalate, via the formation of 2-isopropylmaleate. The protein is 3-isopropylmalate dehydratase small subunit of Salmonella schwarzengrund (strain CVM19633).